The chain runs to 406 residues: Putative ankyrin repeat protein RF_0266 (406 aa).

ANK repeat units lie at residues 68–98 (TSHS…DINN), 103–129 (NYIT…QDDI), 130–161 (KVQN…IIKP), 163–189 (HIEL…DIEK), and 203–232 (SIDC…KPEQ).

This Rickettsia felis (strain ATCC VR-1525 / URRWXCal2) (Rickettsia azadi) protein is Putative ankyrin repeat protein RF_0266.